Reading from the N-terminus, the 278-residue chain is Purine nucleoside phosphorylase YlmD (278 aa).

Zn(2+)-binding residues include histidine 87, cysteine 132, and histidine 149.

The protein belongs to the purine nucleoside phosphorylase YfiH/LACC1 family. In terms of assembly, homodimer. Cu(2+) serves as cofactor. Zn(2+) is required as a cofactor.

The catalysed reaction is adenosine + phosphate = alpha-D-ribose 1-phosphate + adenine. The enzyme catalyses S-methyl-5'-thioadenosine + phosphate = 5-(methylsulfanyl)-alpha-D-ribose 1-phosphate + adenine. It catalyses the reaction inosine + phosphate = alpha-D-ribose 1-phosphate + hypoxanthine. It carries out the reaction adenosine + H2O + H(+) = inosine + NH4(+). Functionally, purine nucleoside enzyme that catalyzes the phosphorolysis of adenosine and inosine nucleosides, yielding D-ribose 1-phosphate and the respective free bases, adenine and hypoxanthine. Also catalyzes the phosphorolysis of S-methyl-5'-thioadenosine into adenine and S-methyl-5-thio-alpha-D-ribose 1-phosphate. Also has adenosine deaminase activity. This Bacillus subtilis (strain 168) protein is Purine nucleoside phosphorylase YlmD (ylmD).